The chain runs to 288 residues: ATP synthase gamma chain (288 aa).

It belongs to the ATPase gamma chain family. F-type ATPases have 2 components, CF(1) - the catalytic core - and CF(0) - the membrane proton channel. CF(1) has five subunits: alpha(3), beta(3), gamma(1), delta(1), epsilon(1). CF(0) has three main subunits: a, b and c.

It localises to the cell inner membrane. Its function is as follows. Produces ATP from ADP in the presence of a proton gradient across the membrane. The gamma chain is believed to be important in regulating ATPase activity and the flow of protons through the CF(0) complex. This is ATP synthase gamma chain from Aliivibrio salmonicida (strain LFI1238) (Vibrio salmonicida (strain LFI1238)).